We begin with the raw amino-acid sequence, 379 residues long: CCN family member 1 (379 aa).

The signal sequence occupies residues 1–24 (MSSSTIKTLAVAVTLLHLTRLALS). The region spanning 25–94 (TCPAACHCPL…TALKGICRAQ (70 aa)) is the IGFBP N-terminal domain. 6 disulfide bridges follow: Cys26–Cys50, Cys30–Cys52, Cys32–Cys53, Cys39–Cys56, Cys64–Cys78, and Cys70–Cys91. In terms of domain architecture, VWFC spans 98-164 (RPCEYNSRIY…GQCCEEWVCD (67 aa)). The residue at position 184 (Ser184) is a Phosphoserine. Residues 226-271 (KCIVQTTSWSQCSKSCGTGISTRVTNDNSECRLVKETRICEVRPCG) form the TSP type-1 domain. Positions 277-313 (SLKKGKKCSKTKKSPEPVRFTYAGCSSVKKYRPKYCG) are heparin-binding. Disulfide bonds link Cys284–Cys321, Cys301–Cys335, Cys312–Cys351, Cys315–Cys353, and Cys320–Cys357. One can recognise a CTCK domain in the interval 284–358 (CSKTKKSPEP…QSCKCNYNCP (75 aa)).

Belongs to the CCN family. Interaction with integrins is heparin- and cell-type-dependent and promotes cell adhesion.

It is found in the secreted. Promotes cell proliferation, chemotaxis, angiogenesis and cell adhesion. Appears to play a role in wound healing by up-regulating, in skin fibroblasts, the expression of a number of genes involved in angiogenesis, inflammation and matrix remodeling including VEGA-A, VEGA-C, MMP1, MMP3, TIMP1, uPA, PAI-1 and integrins alpha-3 and alpha-5. CCN1-mediated gene regulation is dependent on heparin-binding. Down-regulates the expression of alpha-1 and alpha-2 subunits of collagen type-1. Promotes cell adhesion and adhesive signaling through integrin alpha-6/beta-1, cell migration through integrin alpha-1/beta-5 and cell proliferation through integrin alpha-v/beta-3. This chain is CCN family member 1, found in Rattus norvegicus (Rat).